A 752-amino-acid chain; its full sequence is Complement C2 (752 aa).

Positions 1 to 20 (MGPLMVLFCLLFLYPGLADS) are cleaved as a signal peptide. 3 consecutive Sushi domains span residues 22–86 (PSCP…VCKP), 87–146 (VRCP…VCDN), and 149–206 (GHCP…ICRQ). 6 disulfides stabilise this stretch: Cys-24–Cys-64, Cys-51–Cys-84, Cys-89–Cys-131, Cys-117–Cys-144, Cys-151–Cys-191, and Cys-177–Cys-204. The N-linked (GlcNAc...) asparagine glycan is linked to Asn-29. N-linked (GlcNAc...) asparagine glycosylation occurs at Asn-112. The VWFA domain maps to 254–452 (NLYLLLDCSQ…KALHQVFEHM (199 aa)). Positions 260–264 (DCSQS) match the MIDAS-like motif motif. Mg(2+)-binding residues include Ser-262 and Ser-264. N-linked (GlcNAc...) asparagine glycans are attached at residues Asn-290 and Asn-333. Mg(2+) is bound at residue Thr-337. 3 disulfide bridges follow: Cys-463/Cys-581, Cys-492/Cys-508, and Cys-584/Cys-600. In terms of domain architecture, Peptidase S1 spans 464-744 (GVGNMSANAS…MQPWLRQHLG (281 aa)). N-linked (GlcNAc...) asparagine glycosylation is found at Asn-467 and Asn-471. Active-site charge relay system residues include His-507 and Asp-561. Asn-621 carries an N-linked (GlcNAc...) asparagine glycan. Cystine bridges form between Cys-638-Cys-665 and Cys-675-Cys-705. Ser-679 (charge relay system) is an active-site residue.

The protein belongs to the peptidase S1 family. Serine protease component of the C3 convertase, also named C4bC2b, composed of the serine protease complement C2b and complement C4b. Serine protease component of the C5 convertase, also named C4bC2bC3b, composed of the serine protease complement C2b, complement C3b, as well as complement C4b. It depends on Mg(2+) as a cofactor. The cofactor is Mn(2+). Cleaved and activated by different proteases depending on the complement pathway to generate complement C2a and serine protease complement C2b chains. Cleaved and activated by C1S following activation by the classical complement system. Cleaved and activated by MASP2 following activation by the lectin complement system. Cleaved and activated by GZMK following activation by the GZMK complement system.

It is found in the secreted. It localises to the cell surface. The enzyme catalyses Selective cleavage of Arg-|-Ser bond in complement component C3 alpha-chain to form C3a and C3b, and Arg-|-Xaa bond in complement component C5 alpha-chain to form C5a and C5b.. Precursor of the catalytic component of the C3 and C5 convertase complexes, which are part of the complement pathway, a cascade of proteins that leads to phagocytosis and breakdown of pathogens and signaling that strengthens the adaptive immune system. Component C2 is part of the classical, lectin and GZMK complement systems. Functionally, catalytic component of the complement C3 and C5 convertase complexes. Following complement activation, recruited to the surface of pathogens by complement C4b opsonin to form the C3 convertase, or C3b and C4b opsonins to form the C5 convertase. As part of the C3 convertase, cleaves and activate C3 into C3a anaphylatoxin and C3b opsonin, the next components of the complement pathways. As part of the C5 convertase, cleaves and activate C5 into C5a anaphylatoxin and C5b component of the membrane attack complex. The polypeptide is Complement C2 (Pongo pygmaeus (Bornean orangutan)).